Here is a 239-residue protein sequence, read N- to C-terminus: Small ribosomal subunit protein uS3 (239 aa).

The KH type-2 domain occupies 39 to 107; the sequence is VRQVLRKKMS…SVHINVIEVR (69 aa). A disordered region spans residues 214-239; that stretch reads GQEKQDDGSRGDRNADRSSRRSREVR. Basic and acidic residues predominate over residues 216 to 239; sequence EKQDDGSRGDRNADRSSRRSREVR.

The protein belongs to the universal ribosomal protein uS3 family. Part of the 30S ribosomal subunit. Forms a tight complex with proteins S10 and S14.

Binds the lower part of the 30S subunit head. Binds mRNA in the 70S ribosome, positioning it for translation. The sequence is that of Small ribosomal subunit protein uS3 from Xylella fastidiosa (strain M12).